Reading from the N-terminus, the 874-residue chain is Alanine--tRNA ligase (874 aa).

Zn(2+) is bound by residues histidine 562, histidine 566, cysteine 664, and histidine 668.

The protein belongs to the class-II aminoacyl-tRNA synthetase family. Requires Zn(2+) as cofactor.

The protein resides in the cytoplasm. The catalysed reaction is tRNA(Ala) + L-alanine + ATP = L-alanyl-tRNA(Ala) + AMP + diphosphate. Its function is as follows. Catalyzes the attachment of alanine to tRNA(Ala) in a two-step reaction: alanine is first activated by ATP to form Ala-AMP and then transferred to the acceptor end of tRNA(Ala). Also edits incorrectly charged Ser-tRNA(Ala) and Gly-tRNA(Ala) via its editing domain. This is Alanine--tRNA ligase from Shewanella baltica (strain OS155 / ATCC BAA-1091).